The primary structure comprises 1341 residues: WD repeat-containing protein 19 (1341 aa).

6 WD repeats span residues 11 to 51 (SWLG…RSEI), 52 to 92 (SLPG…TSQL), 95 to 134 (GMRD…KIPV), 137 to 175 (KHTK…IRQT), 273 to 311 (DHKD…DMYA), and 317 to 356 (DENK…LGDA). TPR repeat units lie at residues 736 to 769 (AQDL…AKRL), 775 to 808 (PFIS…DNKE), 840 to 873 (RVLK…DRAA), 895 to 928 (PKIH…NSVI), 951 to 984 (LDGA…NEAF), and 1020 to 1053 (EKRH…EDNV).

Component of the IFT complex A (IFT-A) complex. IFT-A complex is divided into a core subcomplex composed of IFT122:IFT140:WDR19 which is associated with TULP3 and a peripheral subcomplex composed of IFT43:WDR35:TTC21B. Interacts (via C-terminal region) with IFT122 (via C-terminal region). Interacts with BBS1. Interacts with TTC25. As to expression, tissue-specific expression of isoforms. Expressed in the prostate, testis, epididymis, submaxillary and salivary glands. Expressed in ependymal cells lining brain ventricles (at protein level).

It localises to the cell projection. Its subcellular location is the cilium. The protein resides in the cytoplasm. It is found in the cytoskeleton. The protein localises to the cilium basal body. It localises to the photoreceptor outer segment. Its subcellular location is the flagellum. As component of the IFT complex A (IFT-A), a complex required for retrograde ciliary transport and entry into cilia of G protein-coupled receptors (GPCRs), it is involved in cilia function and/or assembly. Essential for functional IFT-A assembly and ciliary entry of GPCRs. Associates with the BBSome complex to mediate ciliary transport. In Mus musculus (Mouse), this protein is WD repeat-containing protein 19.